A 197-amino-acid polypeptide reads, in one-letter code: Elongation factor Ts (197 aa).

The interval 81 to 84 is involved in Mg(2+) ion dislocation from EF-Tu; that stretch reads TDFV.

It belongs to the EF-Ts family.

Its subcellular location is the cytoplasm. Its function is as follows. Associates with the EF-Tu.GDP complex and induces the exchange of GDP to GTP. It remains bound to the aminoacyl-tRNA.EF-Tu.GTP complex up to the GTP hydrolysis stage on the ribosome. This Persephonella marina (strain DSM 14350 / EX-H1) protein is Elongation factor Ts.